Reading from the N-terminus, the 176-residue chain is NAD(P)H-quinone oxidoreductase subunit 6, chloroplastic (176 aa).

Transmembrane regions (helical) follow at residues 10 to 30 (FLLV…VLLP), 32 to 52 (PIYS…FYIL), 61 to 81 (AQLL…VMFM), 92 to 112 (LWTV…ISLI), and 152 to 172 (FFLP…GAIA).

The protein belongs to the complex I subunit 6 family. NDH is composed of at least 16 different subunits, 5 of which are encoded in the nucleus.

It is found in the plastid. The protein localises to the chloroplast thylakoid membrane. It carries out the reaction a plastoquinone + NADH + (n+1) H(+)(in) = a plastoquinol + NAD(+) + n H(+)(out). It catalyses the reaction a plastoquinone + NADPH + (n+1) H(+)(in) = a plastoquinol + NADP(+) + n H(+)(out). Functionally, NDH shuttles electrons from NAD(P)H:plastoquinone, via FMN and iron-sulfur (Fe-S) centers, to quinones in the photosynthetic chain and possibly in a chloroplast respiratory chain. The immediate electron acceptor for the enzyme in this species is believed to be plastoquinone. Couples the redox reaction to proton translocation, and thus conserves the redox energy in a proton gradient. The sequence is that of NAD(P)H-quinone oxidoreductase subunit 6, chloroplastic (ndhG) from Nicotiana tabacum (Common tobacco).